We begin with the raw amino-acid sequence, 643 residues long: uncharacterized protein (643 aa).

The segment at 561 to 643 (LNQELETSSE…GADRKKRGVY (83 aa)) is disordered. Residues 591–606 (SRGGRGGRGARGGNRG) are compositionally biased toward gly residues. A compositionally biased stretch (basic and acidic residues) spans 617–635 (GHDRQMKEKHKSDIKQRGA).

This is an uncharacterized protein from Caenorhabditis elegans.